The primary structure comprises 303 residues: 2-dehydropantoate 2-reductase (303 aa).

NADP(+) is bound by residues 7-12, N98, and A122; that span reads GCGALG. N98 is a binding site for substrate. Residue K176 is the Proton donor of the active site. Residues N180, N184, N194, and S244 each contribute to the substrate site. NADP(+) is bound at residue E256.

The protein belongs to the ketopantoate reductase family. As to quaternary structure, monomer.

It localises to the cytoplasm. The enzyme catalyses (R)-pantoate + NADP(+) = 2-dehydropantoate + NADPH + H(+). It participates in cofactor biosynthesis; (R)-pantothenate biosynthesis; (R)-pantoate from 3-methyl-2-oxobutanoate: step 2/2. In terms of biological role, catalyzes the NADPH-dependent reduction of ketopantoate into pantoic acid. Has a strong preference for NADPH over NADH as the electron acceptor. Pantoate, ketoisovalerate, oxaloacetate, pyruvate, 3-hydroxypyruvate, alpha-ketoglutarate, alpha-ketobutyrate, and acetaldehyde cannot serve as substrates for reduction. The chain is 2-dehydropantoate 2-reductase from Salmonella typhimurium (strain LT2 / SGSC1412 / ATCC 700720).